The primary structure comprises 701 residues: DUF724 domain-containing protein 6 (701 aa).

Disordered regions lie at residues 299-353 (MKTK…KRAN) and 374-452 (VEPV…DESC). Basic and acidic residues predominate over residues 326 to 340 (LNLEKSAETLTKAES). The segment covering 381-399 (RVRTATPLKQTKADTQGKS) has biased composition (polar residues). Composition is skewed to basic and acidic residues over residues 403 to 412 (KTLEPMRDEN), 421 to 430 (KVLEEKNSEK), and 437 to 449 (RQEE…KETD). The region spanning 514 to 700 (LPFAKKSPFW…LEFQSTASAP (187 aa)) is the DUF724 domain. Residues 626 to 670 (LEKKIEAGEIEGHTYEEEMAELELKILELKRQQVVAKEMKEATDK) are a coiled coil.

In terms of tissue distribution, expressed in roots, stems and flowers.

The protein localises to the nucleus. In terms of biological role, may be involved in the polar growth of plant cells via transportation of RNAs. The protein is DUF724 domain-containing protein 6 of Arabidopsis thaliana (Mouse-ear cress).